A 231-amino-acid chain; its full sequence is Orotidine 5'-phosphate decarboxylase (231 aa).

Substrate contacts are provided by residues D11, K32, D59–T68, T118, R180, Q189, G209, and R210. K61 (proton donor) is an active-site residue.

The protein belongs to the OMP decarboxylase family. Type 1 subfamily. As to quaternary structure, homodimer.

It catalyses the reaction orotidine 5'-phosphate + H(+) = UMP + CO2. Its pathway is pyrimidine metabolism; UMP biosynthesis via de novo pathway; UMP from orotate: step 2/2. Its function is as follows. Catalyzes the decarboxylation of orotidine 5'-monophosphate (OMP) to uridine 5'-monophosphate (UMP). In Synechocystis sp. (strain ATCC 27184 / PCC 6803 / Kazusa), this protein is Orotidine 5'-phosphate decarboxylase.